A 336-amino-acid polypeptide reads, in one-letter code: Tryptophan--tRNA ligase (336 aa).

ATP is bound by residues 11-13 (TTT) and 19-20 (GN). Positions 12 to 20 (TTGIPHLGN) match the 'HIGH' region motif. Position 145 (Asp-145) interacts with L-tryptophan. ATP contacts are provided by residues 157-159 (GRD), Leu-196, and 203-207 (KMSKS). The 'KMSKS' region signature appears at 203-207 (KMSKS).

The protein belongs to the class-I aminoacyl-tRNA synthetase family. As to quaternary structure, homodimer.

The protein localises to the cytoplasm. It catalyses the reaction tRNA(Trp) + L-tryptophan + ATP = L-tryptophyl-tRNA(Trp) + AMP + diphosphate + H(+). Catalyzes the attachment of tryptophan to tRNA(Trp). In Neisseria meningitidis serogroup A / serotype 4A (strain DSM 15465 / Z2491), this protein is Tryptophan--tRNA ligase.